A 252-amino-acid chain; its full sequence is tRNA (guanine-N(1)-)-methyltransferase (252 aa).

S-adenosyl-L-methionine is bound by residues G113 and 133–138; that span reads VGDFVL.

It belongs to the RNA methyltransferase TrmD family. As to quaternary structure, homodimer.

The protein resides in the cytoplasm. The enzyme catalyses guanosine(37) in tRNA + S-adenosyl-L-methionine = N(1)-methylguanosine(37) in tRNA + S-adenosyl-L-homocysteine + H(+). Specifically methylates guanosine-37 in various tRNAs. The sequence is that of tRNA (guanine-N(1)-)-methyltransferase from Francisella tularensis subsp. holarctica (strain FTNF002-00 / FTA).